Reading from the N-terminus, the 365-residue chain is UDP-N-acetylglucosamine--N-acetylmuramyl-(pentapeptide) pyrophosphoryl-undecaprenol N-acetylglucosamine transferase (365 aa).

UDP-N-acetyl-alpha-D-glucosamine-binding positions include 10-12 (TAG), asparagine 124, arginine 161, serine 195, isoleucine 248, and glutamine 292.

Belongs to the glycosyltransferase 28 family. MurG subfamily.

Its subcellular location is the cell membrane. It carries out the reaction di-trans,octa-cis-undecaprenyl diphospho-N-acetyl-alpha-D-muramoyl-L-alanyl-D-glutamyl-meso-2,6-diaminopimeloyl-D-alanyl-D-alanine + UDP-N-acetyl-alpha-D-glucosamine = di-trans,octa-cis-undecaprenyl diphospho-[N-acetyl-alpha-D-glucosaminyl-(1-&gt;4)]-N-acetyl-alpha-D-muramoyl-L-alanyl-D-glutamyl-meso-2,6-diaminopimeloyl-D-alanyl-D-alanine + UDP + H(+). It functions in the pathway cell wall biogenesis; peptidoglycan biosynthesis. In terms of biological role, cell wall formation. Catalyzes the transfer of a GlcNAc subunit on undecaprenyl-pyrophosphoryl-MurNAc-pentapeptide (lipid intermediate I) to form undecaprenyl-pyrophosphoryl-MurNAc-(pentapeptide)GlcNAc (lipid intermediate II). The chain is UDP-N-acetylglucosamine--N-acetylmuramyl-(pentapeptide) pyrophosphoryl-undecaprenol N-acetylglucosamine transferase from Nocardioides sp. (strain ATCC BAA-499 / JS614).